A 292-amino-acid polypeptide reads, in one-letter code: Protein sarah (292 aa).

Positions 1-51 are enriched in low complexity; it reads MSDAAKSNNNASADAPDPTTPDATGEADAANAATPTTPRGNHNNNNSANGR. Residues 1–111 are disordered; sequence MSDAAKSNNN…TEPEVDADSF (111 aa). 3 positions are modified to phosphoserine: Ser67, Ser72, and Ser100. The segment covering 98-111 has biased composition (acidic residues); sequence VDSDTEPEVDADSF. Phosphothreonine occurs at positions 102 and 196. Phosphoserine is present on residues Ser215 and Ser219. Thr246 bears the Phosphothreonine mark.

This sequence belongs to the RCAN family. As to quaternary structure, interacts with Pp2B-14D, CanA-14F and CanB2. Post-translationally, phosphorylation at Ser-215 and Ser-219 is essential for calcineurin activation and completion of female meiosis. Sgg is required for phosphorylation of Ser-215 in activated eggs. Ser-100, Thr-102 and Ser-219 are highly phosphorylated in both ovaries and activated eggs; however, phosphorylation at Ser-100 or Thr-102 is not required for sra function in completion of female meiosis. In terms of tissue distribution, expressed in central nervous system of the third instar larvae, with a relatively intense signal in the brain and weak signals in the ventral ganglion. Relatively low, but ubiquitous expression level is observed in leg and wing imaginal disks, no signal is detected in the eye-antennal disks. Expressed in all neurons in the adult brain.

Its function is as follows. Required for elongation of meiosis I spindle. Critical for ovulation, meiotic progression in oocytes and female courtship behavior, including their postmating changes. Regulates female meiosis by controlling calcineurin activity in the germline. Has a role in calcium signaling during egg activation; bcd mRNA polyadenylation and translation in the oocyte. This chain is Protein sarah (sra), found in Drosophila melanogaster (Fruit fly).